Here is a 555-residue protein sequence, read N- to C-terminus: Glucose-6-phosphate isomerase (555 aa).

E355 (proton donor) is an active-site residue. Catalysis depends on residues H386 and K514.

This sequence belongs to the GPI family.

The protein localises to the cytoplasm. The enzyme catalyses alpha-D-glucose 6-phosphate = beta-D-fructose 6-phosphate. It participates in carbohydrate biosynthesis; gluconeogenesis. It functions in the pathway carbohydrate degradation; glycolysis; D-glyceraldehyde 3-phosphate and glycerone phosphate from D-glucose: step 2/4. Catalyzes the reversible isomerization of glucose-6-phosphate to fructose-6-phosphate. This chain is Glucose-6-phosphate isomerase, found in Buchnera aphidicola subsp. Schizaphis graminum (strain Sg).